Here is a 397-residue protein sequence, read N- to C-terminus: Elongation factor Tu 2 (397 aa).

The 197-residue stretch at 10–206 (KPHVNIGTIG…AIDTWIPEPV (197 aa)) folds into the tr-type G domain. Residues 19–26 (GHVDHGKT) form a G1 region. 19–26 (GHVDHGKT) contacts GTP. A Mg(2+)-binding site is contributed by threonine 26. The G2 stretch occupies residues 61-65 (GITIS). The tract at residues 82 to 85 (DCPG) is G3. Residues 82 to 86 (DCPGH) and 137 to 140 (NKCD) contribute to the GTP site. A G4 region spans residues 137–140 (NKCD). Residues 175 to 177 (SAL) are G5.

This sequence belongs to the TRAFAC class translation factor GTPase superfamily. Classic translation factor GTPase family. EF-Tu/EF-1A subfamily. In terms of assembly, monomer.

Its subcellular location is the cytoplasm. It carries out the reaction GTP + H2O = GDP + phosphate + H(+). In terms of biological role, GTP hydrolase that promotes the GTP-dependent binding of aminoacyl-tRNA to the A-site of ribosomes during protein biosynthesis. In Alkaliphilus metalliredigens (strain QYMF), this protein is Elongation factor Tu 2.